Here is a 606-residue protein sequence, read N- to C-terminus: Melanoma-associated antigen D2 (606 aa).

Disordered stretches follow at residues 1–29 and 52–204; these read MSDT…MMQT and SEDV…GGRR. S2 bears the N-acetylserine mark. Residue S5 is modified to Phosphoserine. At T72 the chain carries Phosphothreonine. Positions 79 to 100 are enriched in polar residues; it reads PATQASSTTQLTDTQVLATENK. The span at 122-131 shows a compositional bias: basic and acidic residues; it reads ETKKVSHVAD. The segment covering 142–164 has biased composition (low complexity); that stretch reads EAAPSQASADEPEPESAAAQSQE. At S157 the chain carries Phosphoserine. The span at 171-181 shows a compositional bias: basic residues; it reads KVKAKKARKVK. Residues S190, S191, S194, S197, S244, and S247 each carry the phosphoserine modification. The segment covering 248–260 has biased composition (basic residues); it reads PKARRGKARRRAA. The disordered stretch occupies residues 248–275; it reads PKARRGKARRRAAKLQSSQEPEAPPPRD. A phosphoserine mark is found at S264 and S265. The 200-residue stretch at 279–478 folds into the MAGE domain; the sequence is LQGRANDLVK…KEWAAQYREA (200 aa). The disordered stretch occupies residues 534–563; that stretch reads GAEAKAKAQESGSASTGASTSTNNSASASA.

In terms of assembly, interacts with GNAS.

In terms of biological role, regulates the expression, localization to the plasma membrane and function of the sodium chloride cotransporters SLC12A1 and SLC12A3, two key components of salt reabsorption in the distal renal tubule. This Pongo abelii (Sumatran orangutan) protein is Melanoma-associated antigen D2 (MAGED2).